The chain runs to 331 residues: Ferredoxin--NADP reductase 2 (331 aa).

Residues E37, Q45, Y50, V90, F124, D285, and T326 each contribute to the FAD site.

This sequence belongs to the ferredoxin--NADP reductase type 2 family. In terms of assembly, homodimer. FAD serves as cofactor.

It catalyses the reaction 2 reduced [2Fe-2S]-[ferredoxin] + NADP(+) + H(+) = 2 oxidized [2Fe-2S]-[ferredoxin] + NADPH. This chain is Ferredoxin--NADP reductase 2, found in Bacillus velezensis (strain DSM 23117 / BGSC 10A6 / LMG 26770 / FZB42) (Bacillus amyloliquefaciens subsp. plantarum).